The sequence spans 784 residues: Cadherin-5 (784 aa).

The N-terminal stretch at M1–A25 is a signal peptide. Residues A26–R47 constitute a propeptide that is removed on maturation. 5 Cadherin domains span residues D48–F151, T152–F258, T259–F372, Q373–P477, and E478–Q593. Residues D48–Q599 lie on the Extracellular side of the membrane. Positions 58 and 59 each coordinate Ca(2+). An N-linked (GlcNAc...) (complex) asparagine glycan is attached at N61. The Ca(2+) site is built by D109 and E111. A glycan (N-linked (GlcNAc...) (complex) asparagine) is linked at N112. Ca(2+) is bound by residues D143, V144, N145, D146, and N147. The N-linked (GlcNAc...) asparagine glycan is linked to N157. Residues D177, D179, H186, and D231 each coordinate Ca(2+). N-linked (GlcNAc...) asparagine glycosylation is present at N362. The N-linked (GlcNAc...) (complex) asparagine glycan is linked to N442. N523 and N535 each carry an N-linked (GlcNAc...) asparagine glycan. A helical membrane pass occupies residues A600–L620. The required for interaction with PALS1 stretch occupies residues R621–V660. Residues R621–Y784 are Cytoplasmic-facing.

Part of a complex composed of AMOTL2, MAGI1 and CDH5, within the complex AMOTL2 acts as a scaffold protein for the interaction of MAGI1 with CDH5. The complex is required for coupling actin fibers to cell junctions in endothelial cells. Within the complex AMOTL2 (via its N-terminus) interacts with CDH5. Interacts (via cadherin 5 domain) with PTPRB. Interacts with TRPC4. Interacts with KRIT1. Interacts with PARD3. Interacts with RTN4 (isoform B). Interacts with PALS1; the interaction promotes PALS1 localization to cell junctions and is required for CDH5-mediated vascular lumen formation and endothelial cell. Interacts with CTNND1/p120-catenin; the interaction controls CADH5 endocytosis. Post-translationally, phosphorylated on tyrosine residues by KDR/VEGFR-2. Dephosphorylated by PTPRB. O-glycosylated. In terms of tissue distribution, expressed in endothelial cells (at protein level). Expressed in the brain.

The protein resides in the cell junction. The protein localises to the adherens junction. Its subcellular location is the cell membrane. It localises to the cytoplasm. In terms of biological role, cadherins are calcium-dependent cell adhesion proteins. They preferentially interact with themselves in a homophilic manner in connecting cells; cadherins may thus contribute to the sorting of heterogeneous cell types. This cadherin may play a important role in endothelial cell biology through control of the cohesion and organization of the intercellular junctions. It associates with alpha-catenin forming a link to the cytoskeleton. Plays a role in coupling actin fibers to cell junctions in endothelial cells, via acting as a cell junctional complex anchor for AMOTL2 and MAGI1. Acts in concert with KRIT1 and PALS1 to establish and maintain correct endothelial cell polarity and vascular lumen. These effects are mediated by recruitment and activation of the Par polarity complex and RAP1B. Required for activation of PRKCZ and for the localization of phosphorylated PRKCZ, PARD3, TIAM1 and RAP1B to the cell junction. Associates with CTNND1/p120-catenin to control CADH5 endocytosis. The chain is Cadherin-5 from Homo sapiens (Human).